The following is a 203-amino-acid chain: ATP-dependent Clp protease proteolytic subunit (203 aa).

Catalysis depends on Ser107, which acts as the Nucleophile. His132 is a catalytic residue.

This sequence belongs to the peptidase S14 family. Fourteen ClpP subunits assemble into 2 heptameric rings which stack back to back to give a disk-like structure with a central cavity, resembling the structure of eukaryotic proteasomes.

The protein localises to the cytoplasm. It catalyses the reaction Hydrolysis of proteins to small peptides in the presence of ATP and magnesium. alpha-casein is the usual test substrate. In the absence of ATP, only oligopeptides shorter than five residues are hydrolyzed (such as succinyl-Leu-Tyr-|-NHMec, and Leu-Tyr-Leu-|-Tyr-Trp, in which cleavage of the -Tyr-|-Leu- and -Tyr-|-Trp bonds also occurs).. Its function is as follows. Cleaves peptides in various proteins in a process that requires ATP hydrolysis. Has a chymotrypsin-like activity. Plays a major role in the degradation of misfolded proteins. The polypeptide is ATP-dependent Clp protease proteolytic subunit (Shewanella sediminis (strain HAW-EB3)).